The sequence spans 402 residues: Probable peptidoglycan glycosyltransferase FtsW (402 aa).

Residues 1 to 24 (MLYRLKLLLSGQNTKKERVRAKLE) are Cytoplasmic-facing. A helical transmembrane segment spans residues 25–45 (IDISIVFVMLGLLIFGWVMVT). The Periplasmic segment spans residues 46 to 63 (SASMVVALDDYNNPYFYS). A helical membrane pass occupies residues 64–84 (IRQGFFAVIAIFLFLLALLVP). At 85–91 (TKNYEKN) the chain is on the cytoplasmic side. The helical transmembrane segment at 92-112 (YNAFFFIMLIVLVAVLVPGVG) threads the bilayer. Over 113–121 (KSVNGARRW) the chain is Periplasmic. The helical transmembrane segment at 122 to 142 (IPLIIINIQVAELAKLLAIIF) threads the bilayer. Over 143–160 (FSGYIAENLPKMTNFKEG) the chain is Cytoplasmic. Transmembrane regions (helical) follow at residues 161 to 181 (ILTP…QPDF) and 182 to 202 (GSTV…GNKV). A topological domain (cytoplasmic) is located at residue R203. A helical membrane pass occupies residues 204–224 (WYGLLIGAMLIMATMLVIISP). Residues 225-284 (YRMHRITGFLHPWENANGSGYQLVQALIGFGRGGWFGDGLGNGVQKQFFLPEAHTDFITS) are Periplasmic-facing. The helical transmembrane segment at 285–305 (VIAEEIGVIGLMILLMVYLFI) threads the bilayer. Topologically, residues 306-324 (VFRAMNIAKMAFELKRYYQ) are cytoplasmic. A helical membrane pass occupies residues 325-345 (AFLSYGISFWIGFQVFVNIGV). At 346–357 (NTGLLPTKGLTL) the chain is on the periplasmic side. Residues 358-378 (PLISYGGSSLLIMCFTLGILV) traverse the membrane as a helical segment. Residues 379-402 (RVDFENKLLADTINPKYIYKKVRK) are Cytoplasmic-facing.

Belongs to the SEDS family. FtsW subfamily.

It localises to the cell inner membrane. The enzyme catalyses [GlcNAc-(1-&gt;4)-Mur2Ac(oyl-L-Ala-gamma-D-Glu-L-Lys-D-Ala-D-Ala)](n)-di-trans,octa-cis-undecaprenyl diphosphate + beta-D-GlcNAc-(1-&gt;4)-Mur2Ac(oyl-L-Ala-gamma-D-Glu-L-Lys-D-Ala-D-Ala)-di-trans,octa-cis-undecaprenyl diphosphate = [GlcNAc-(1-&gt;4)-Mur2Ac(oyl-L-Ala-gamma-D-Glu-L-Lys-D-Ala-D-Ala)](n+1)-di-trans,octa-cis-undecaprenyl diphosphate + di-trans,octa-cis-undecaprenyl diphosphate + H(+). It participates in cell wall biogenesis; peptidoglycan biosynthesis. Its function is as follows. Peptidoglycan polymerase that is essential for cell division. In Francisella salina, this protein is Probable peptidoglycan glycosyltransferase FtsW.